The chain runs to 444 residues: Tol-Pal system protein TolB (444 aa).

An N-terminal signal peptide occupies residues 1 to 18 (MRNIIYFILLLFSCTGYA).

Belongs to the TolB family. In terms of assembly, the Tol-Pal system is composed of five core proteins: the inner membrane proteins TolA, TolQ and TolR, the periplasmic protein TolB and the outer membrane protein Pal. They form a network linking the inner and outer membranes and the peptidoglycan layer.

The protein localises to the periplasm. Functionally, part of the Tol-Pal system, which plays a role in outer membrane invagination during cell division and is important for maintaining outer membrane integrity. In Rickettsia canadensis (strain McKiel), this protein is Tol-Pal system protein TolB.